Consider the following 862-residue polypeptide: Genome polyprotein (862 aa).

Glycine 2 carries the N-myristoyl glycine; by host lipid modification.

The protein belongs to the picornaviruses polyprotein family. Interacts with capsid protein VP1 and capsid protein VP3 to form heterotrimeric protomers. In terms of assembly, interacts with capsid protein VP0, and capsid protein VP3 to form heterotrimeric protomers. Five protomers subsequently associate to form pentamers which serve as building blocks for the capsid. Interacts with capsid protein VP2, capsid protein VP3 and capsid protein VP4 following cleavage of capsid protein VP0. As to quaternary structure, interacts with capsid protein VP1 and capsid protein VP3 in the mature capsid. Interacts with capsid protein VP0 and capsid protein VP1 to form heterotrimeric protomers. Five protomers subsequently associate to form pentamers which serve as building blocks for the capsid. Interacts with capsid protein VP4 in the mature capsid. Interacts with protein 2C; this interaction may be important for virion morphogenesis. In terms of assembly, interacts with capsid protein VP1 and capsid protein VP3. Post-translationally, specific enzymatic cleavages in vivo by the viral proteases yield processing intermediates and the mature proteins. In terms of processing, myristoylation is required for the formation of pentamers during virus assembly. Further assembly of 12 pentamers and a molecule of genomic RNA generates the provirion. During virion maturation, immature virions are rendered infectious following cleavage of VP0 into VP4 and VP2. This maturation seems to be an autocatalytic event triggered by the presence of RNA in the capsid and it is followed by a conformational change infectious virion. Post-translationally, myristoylation is required during RNA encapsidation and formation of the mature virus particle.

The protein resides in the virion. It localises to the host cytoplasm. Its function is as follows. Forms an icosahedral capsid of pseudo T=3 symmetry with capsid proteins VP2 and VP3. The capsid is 300 Angstroms in diameter, composed of 60 copies of each capsid protein and enclosing the viral positive strand RNA genome. Capsid protein VP1 mainly forms the vertices of the capsid. Capsid protein VP1 interacts with host cell receptor to provide virion attachment to target host cells. This attachment induces virion internalization. Tyrosine kinases are probably involved in the entry process. After binding to its receptor, the capsid undergoes conformational changes. Capsid protein VP1 N-terminus (that contains an amphipathic alpha-helix) and capsid protein VP4 are externalized. Together, they shape a pore in the host membrane through which viral genome is translocated to host cell cytoplasm. Functionally, forms an icosahedral capsid of pseudo T=3 symmetry with capsid proteins VP2 and VP3. The capsid is 300 Angstroms in diameter, composed of 60 copies of each capsid protein and enclosing the viral positive strand RNA genome. Lies on the inner surface of the capsid shell. After binding to the host receptor, the capsid undergoes conformational changes. Capsid protein VP4 is released, Capsid protein VP1 N-terminus is externalized, and together, they shape a pore in the host membrane through which the viral genome is translocated into the host cell cytoplasm. In terms of biological role, component of immature procapsids, which is cleaved into capsid proteins VP4 and VP2 after maturation. Allows the capsid to remain inactive before the maturation step. This chain is Genome polyprotein, found in Echovirus 16 (strain Harrington).